Consider the following 2548-residue polypeptide: Unconventional myosin-IXa (2548 aa).

One can recognise a Ras-associating domain in the interval asparagine 14 to leucine 112. Positions lysine 146–histidine 1016 constitute a Myosin motor domain. A helical membrane pass occupies residues isoleucine 175–tyrosine 195. Glycine 239–threonine 246 contacts ATP. Position 755 is a phosphoserine (serine 755). An actin-binding region spans residues leucine 898 to alanine 920. IQ domains follow at residues arginine 1021–histidine 1041, leucine 1042–alanine 1071, methionine 1074–valine 1103, arginine 1115–leucine 1144, and glutamine 1138–arginine 1167. The tract at residues arginine 1021 to lysine 1162 is neck or regulatory domain. Residues glutamate 1163–lysine 2511 form a tail region. The span at serine 1223–glutamate 1236 shows a compositional bias: basic and acidic residues. Residues serine 1223–valine 1250 are disordered. A phosphoserine mark is found at serine 1242 and serine 1258. The stretch at glutamine 1264–lysine 1291 forms a coiled coil. Residues serine 1299 and serine 1317 each carry the phosphoserine modification. The interval serine 1299 to leucine 1386 is disordered. Composition is skewed to low complexity over residues serine 1324–glutamate 1337 and phenylalanine 1356–lysine 1366. Serine 1364 bears the Phosphoserine mark. Residues asparagine 1372–serine 1381 are compositionally biased toward polar residues. The stretch at valine 1486–threonine 1532 forms a coiled coil. The segment at tyrosine 1804–arginine 1836 is disordered. Residues cysteine 1818–proline 1830 are compositionally biased toward basic and acidic residues. At serine 1948 the chain carries Phosphoserine. 2 consecutive Phorbol-ester/DAG-type zinc fingers follow at residues glycine 1999–cysteine 2048 and leucine 2068–serine 2119. The Rho-GAP domain maps to valine 2063–tyrosine 2251. Position 2294 is a phosphoserine (serine 2294). Residues alanine 2315–glutamate 2358 adopt a coiled-coil conformation. Disordered stretches follow at residues proline 2359–asparagine 2383 and serine 2401–aspartate 2424. Residue serine 2464 is modified to Phosphoserine. Residues arginine 2490–aspartate 2531 are disordered.

Belongs to the TRAFAC class myosin-kinesin ATPase superfamily. Myosin family. In terms of processing, phosphorylated by ALPK1 following monosodium urate monohydrate (MSU)-induced inflammation. As to expression, found to be expressed in testis and placenta and at lower levels in all the examined tissues with the exception of liver. Isoform 5: Found in leukocytes but not in brain, retina or testis.

Its subcellular location is the membrane. The protein resides in the cytoplasm. It is found in the synapse. The protein localises to the cell projection. It localises to the growth cone. In terms of biological role, myosins are actin-based motor molecules with ATPase activity. Unconventional myosins serve in intracellular movements. Regulates Rho by stimulating it's GTPase activity in neurons. Required for the regulation of neurite branching and motor neuron axon guidance. This chain is Unconventional myosin-IXa (MYO9A), found in Homo sapiens (Human).